Reading from the N-terminus, the 197-residue chain is Putative manganese efflux pump MntP 1 (197 aa).

Helical transmembrane passes span 8–28 (VILLAIALAMDAFAVSIGLGA), 43–63 (VYAALYFGIAQGVMPLIGYLL), 66–86 (VLLGWLATAAPWLGGGILILL), 123–143 (LAIATSIDAMAAGFTLNLLAL), 146–166 (WLACSIIAIVTAGFGFFGIYL), and 176–196 (DKAEILGGLVLIAIGIKVMFI).

It belongs to the MntP (TC 9.B.29) family.

It localises to the cell inner membrane. Probably functions as a manganese efflux pump. The sequence is that of Putative manganese efflux pump MntP 1 from Psychrobacter cryohalolentis (strain ATCC BAA-1226 / DSM 17306 / VKM B-2378 / K5).